The primary structure comprises 106 residues: NADH-quinone oxidoreductase subunit K (106 aa).

A run of 3 helical transmembrane segments spans residues Ile-8 to Val-28, Ile-35 to Phe-55, and Val-66 to Leu-86.

This sequence belongs to the complex I subunit 4L family. As to quaternary structure, NDH-1 is composed of 14 different subunits. Subunits NuoA, H, J, K, L, M, N constitute the membrane sector of the complex.

The protein resides in the cell inner membrane. The catalysed reaction is a quinone + NADH + 5 H(+)(in) = a quinol + NAD(+) + 4 H(+)(out). Functionally, NDH-1 shuttles electrons from NADH, via FMN and iron-sulfur (Fe-S) centers, to quinones in the respiratory chain. The immediate electron acceptor for the enzyme in this species is believed to be a menaquinone. Couples the redox reaction to proton translocation (for every two electrons transferred, four hydrogen ions are translocated across the cytoplasmic membrane), and thus conserves the redox energy in a proton gradient. This is NADH-quinone oxidoreductase subunit K from Flavobacterium johnsoniae (strain ATCC 17061 / DSM 2064 / JCM 8514 / BCRC 14874 / CCUG 350202 / NBRC 14942 / NCIMB 11054 / UW101) (Cytophaga johnsonae).